Reading from the N-terminus, the 318-residue chain is Glycine--tRNA ligase alpha subunit (318 aa).

The protein belongs to the class-II aminoacyl-tRNA synthetase family. In terms of assembly, tetramer of two alpha and two beta subunits.

It localises to the cytoplasm. It carries out the reaction tRNA(Gly) + glycine + ATP = glycyl-tRNA(Gly) + AMP + diphosphate. This Methylibium petroleiphilum (strain ATCC BAA-1232 / LMG 22953 / PM1) protein is Glycine--tRNA ligase alpha subunit.